A 412-amino-acid chain; its full sequence is D-xylonate dehydratase (412 aa).

As to quaternary structure, homooctamer.

It catalyses the reaction D-xylonate = 2-dehydro-3-deoxy-D-arabinonate + H2O. Functionally, NADP-dependent D-xylose dehydrogenase involved in the degradation of D-xylose, a major component of hemicelluloses such as xylan. Catalyzes the third reaction in the xylose utilization pathway through dehydratation of D-xylonate into 2-dehydro-3-deoxy-D-xylonate. The polypeptide is D-xylonate dehydratase (Haloferax volcanii (strain ATCC 29605 / DSM 3757 / JCM 8879 / NBRC 14742 / NCIMB 2012 / VKM B-1768 / DS2) (Halobacterium volcanii)).